Reading from the N-terminus, the 309-residue chain is Branched-chain-amino-acid aminotransferase (309 aa).

An N6-(pyridoxal phosphate)lysine modification is found at Lys160.

It belongs to the class-IV pyridoxal-phosphate-dependent aminotransferase family. As to quaternary structure, homohexamer. Pyridoxal 5'-phosphate is required as a cofactor.

The catalysed reaction is L-leucine + 2-oxoglutarate = 4-methyl-2-oxopentanoate + L-glutamate. It carries out the reaction L-isoleucine + 2-oxoglutarate = (S)-3-methyl-2-oxopentanoate + L-glutamate. The enzyme catalyses L-valine + 2-oxoglutarate = 3-methyl-2-oxobutanoate + L-glutamate. It functions in the pathway amino-acid biosynthesis; L-isoleucine biosynthesis; L-isoleucine from 2-oxobutanoate: step 4/4. Its pathway is amino-acid biosynthesis; L-leucine biosynthesis; L-leucine from 3-methyl-2-oxobutanoate: step 4/4. It participates in amino-acid biosynthesis; L-valine biosynthesis; L-valine from pyruvate: step 4/4. Functionally, acts on leucine, isoleucine and valine. The polypeptide is Branched-chain-amino-acid aminotransferase (ilvE) (Salmonella typhi).